Here is a 548-residue protein sequence, read N- to C-terminus: DNA-binding protein REPIN1 (548 aa).

A disordered region spans residues M1–P47. A compositionally biased stretch (polar residues) spans G22–N31. Residue S27 is modified to Phosphoserine. K39 is modified (N6-acetyllysine). Residues H53–C75 form a C2H2-type 1; atypical zinc finger. 2 C2H2-type zinc fingers span residues L81–H103 and F112–H134. The C2H2-type 4; atypical zinc-finger motif lies at I141–C163. 11 consecutive C2H2-type zinc fingers follow at residues F173 to H195, F232 to H254, H260 to H282, Y288 to H310, H356 to H378, F384 to H406, F412 to H434, F440 to H462, Y468 to H490, Y496 to H518, and F524 to H546. K272 is modified (N6-acetyllysine).

As to quaternary structure, homodimers and homomultimers. Found in a complex with RIP60 and RIP100. In terms of tissue distribution, expressed in the liver and in subcutaneous and visceral adipose tissue.

The protein resides in the nucleus. It is found in the cytoplasm. The protein localises to the cytosol. Sequence-specific double-stranded DNA-binding protein. Binds ATT-rich and T-rich DNA sequences and facilitates DNA bending. May regulate the expression of genes involved in cellular fatty acid import, including SCARB1/CD36, and genes involved in lipid droplet formation. May regulate the expression of LCN2, and thereby influence iron metabolism and apoptosis-related pathways. May regulate the expression of genes involved in glucose transport. This chain is DNA-binding protein REPIN1 (Repin1), found in Rattus norvegicus (Rat).